Consider the following 338-residue polypeptide: Tetraacyldisaccharide 4'-kinase (338 aa).

53–60 (VAGGAGKT) lines the ATP pocket.

The protein belongs to the LpxK family.

It carries out the reaction a lipid A disaccharide + ATP = a lipid IVA + ADP + H(+). It participates in glycolipid biosynthesis; lipid IV(A) biosynthesis; lipid IV(A) from (3R)-3-hydroxytetradecanoyl-[acyl-carrier-protein] and UDP-N-acetyl-alpha-D-glucosamine: step 6/6. Transfers the gamma-phosphate of ATP to the 4'-position of a tetraacyldisaccharide 1-phosphate intermediate (termed DS-1-P) to form tetraacyldisaccharide 1,4'-bis-phosphate (lipid IVA). This is Tetraacyldisaccharide 4'-kinase from Polaromonas sp. (strain JS666 / ATCC BAA-500).